Reading from the N-terminus, the 202-residue chain is Tetranectin (202 aa).

The signal sequence occupies residues 1 to 21; sequence MELWGAYLLLCLFSLLTQVTT. O-linked (GalNAc...) threonine glycosylation occurs at T25. Intrachain disulfides connect C71–C81, C98–C197, and C173–C189. The C-type lectin domain occupies 77–198; it reads VHMKCFLAFT…CRDQLPYICQ (122 aa).

In terms of assembly, homotrimer. In terms of tissue distribution, found in plasma.

The protein localises to the secreted. Functionally, tetranectin binds to plasminogen and to isolated kringle 4. May be involved in the packaging of molecules destined for exocytosis. Plays a role in retinal function. This Homo sapiens (Human) protein is Tetranectin (CLEC3B).